The chain runs to 131 residues: Methylglyoxal synthase (131 aa).

The region spanning 1–131 (MKIALIAHDK…GDLDYRKLRK (131 aa)) is the MGS-like domain. Residues histidine 8, lysine 12, 34–37 (TGTT), and 54–55 (SG) each bind substrate. Aspartate 60 serves as the catalytic Proton donor/acceptor. Histidine 87 contributes to the substrate binding site.

It belongs to the methylglyoxal synthase family.

The catalysed reaction is dihydroxyacetone phosphate = methylglyoxal + phosphate. Functionally, catalyzes the formation of methylglyoxal from dihydroxyacetone phosphate. The sequence is that of Methylglyoxal synthase from Bacillus cereus (strain ATCC 10987 / NRS 248).